We begin with the raw amino-acid sequence, 317 residues long: WSCD family member CG9164 (317 aa).

Residues 8 to 28 (FFGVSATIIIYIGGVLFLSMN) form a helical membrane-spanning segment. N-linked (GlcNAc...) asparagine glycans are attached at residues Asn151, Asn227, and Asn233.

The protein belongs to the WSCD family.

It is found in the membrane. The sequence is that of WSCD family member CG9164 from Drosophila melanogaster (Fruit fly).